The following is a 272-amino-acid chain: uncharacterized protein (272 aa).

Residues 193-250 (AFLLPNNSKGVEKSEENEDGVTDNDSSNVNSSTNESPNPTDINVCSNDDATDNTENNL) form a disordered region. Positions 215 to 233 (DNDSSNVNSSTNESPNPTD) are enriched in low complexity. The span at 235–248 (NVCSNDDATDNTEN) shows a compositional bias: polar residues.

Belongs to the pal1 family.

The protein resides in the cytoplasm. Its subcellular location is the nucleus. This is an uncharacterized protein from Schizosaccharomyces pombe (strain 972 / ATCC 24843) (Fission yeast).